The sequence spans 190 residues: Holliday junction branch migration complex subunit RuvA (190 aa).

Residues 1–64 (MIGKLTGTLL…EDAQLLYGFG (64 aa)) are domain I. The segment at 65–143 (THSERQAFRE…ADTGAQSLFV (79 aa)) is domain II. The tract at residues 144–148 (NNDQN) is flexible linker. Positions 148 to 190 (NDIVQALMALGYSDKDAAAALKKLPPDVGVTEGIKLALKALAK) are domain III.

The protein belongs to the RuvA family. Homotetramer. Forms an RuvA(8)-RuvB(12)-Holliday junction (HJ) complex. HJ DNA is sandwiched between 2 RuvA tetramers; dsDNA enters through RuvA and exits via RuvB. An RuvB hexamer assembles on each DNA strand where it exits the tetramer. Each RuvB hexamer is contacted by two RuvA subunits (via domain III) on 2 adjacent RuvB subunits; this complex drives branch migration. In the full resolvosome a probable DNA-RuvA(4)-RuvB(12)-RuvC(2) complex forms which resolves the HJ.

The protein resides in the cytoplasm. Functionally, the RuvA-RuvB-RuvC complex processes Holliday junction (HJ) DNA during genetic recombination and DNA repair, while the RuvA-RuvB complex plays an important role in the rescue of blocked DNA replication forks via replication fork reversal (RFR). RuvA specifically binds to HJ cruciform DNA, conferring on it an open structure. The RuvB hexamer acts as an ATP-dependent pump, pulling dsDNA into and through the RuvAB complex. HJ branch migration allows RuvC to scan DNA until it finds its consensus sequence, where it cleaves and resolves the cruciform DNA. The chain is Holliday junction branch migration complex subunit RuvA from Delftia acidovorans (strain DSM 14801 / SPH-1).